We begin with the raw amino-acid sequence, 328 residues long: D-cysteine desulfhydrase (328 aa).

Lys51 bears the N6-(pyridoxal phosphate)lysine mark.

The protein belongs to the ACC deaminase/D-cysteine desulfhydrase family. As to quaternary structure, homodimer. Pyridoxal 5'-phosphate serves as cofactor.

The catalysed reaction is D-cysteine + H2O = hydrogen sulfide + pyruvate + NH4(+) + H(+). Catalyzes the alpha,beta-elimination reaction of D-cysteine and of several D-cysteine derivatives. It could be a defense mechanism against D-cysteine. This Shigella flexneri serotype 5b (strain 8401) protein is D-cysteine desulfhydrase.